A 447-amino-acid polypeptide reads, in one-letter code: 1-aminocyclopropane-1-carboxylate synthase 7 (447 aa).

Substrate is bound by residues Glu61 and Tyr100. Position 285 is an N6-(pyridoxal phosphate)lysine (Lys285).

It belongs to the class-I pyridoxal-phosphate-dependent aminotransferase family. Homodimer and heterodimer. In vivo, the relevance of heterodimerization with other ACS enzymes is however unsure. Interacts with XBAT32. Pyridoxal 5'-phosphate serves as cofactor. Ubiquitinated by XBAT32. Ubiquitination probably leads to its subsequent degradation, thus controlling ethylene production. Expressed in roots.

It carries out the reaction S-adenosyl-L-methionine = 1-aminocyclopropane-1-carboxylate + S-methyl-5'-thioadenosine + H(+). It participates in alkene biosynthesis; ethylene biosynthesis via S-adenosyl-L-methionine; ethylene from S-adenosyl-L-methionine: step 1/2. Its function is as follows. 1-aminocyclopropane-1-carboxylate synthase (ACS) enzymes catalyze the conversion of S-adenosyl-L-methionine (SAM) into 1-aminocyclopropane-1-carboxylate (ACC), a direct precursor of ethylene. This Arabidopsis thaliana (Mouse-ear cress) protein is 1-aminocyclopropane-1-carboxylate synthase 7 (ACS7).